We begin with the raw amino-acid sequence, 153 residues long: Large-conductance mechanosensitive channel (153 aa).

2 helical membrane passes run 16–36 (VIDL…VKSL) and 88–108 (GLFI…FMLV).

It belongs to the MscL family. As to quaternary structure, homopentamer.

Its subcellular location is the cell inner membrane. Its function is as follows. Channel that opens in response to stretch forces in the membrane lipid bilayer. May participate in the regulation of osmotic pressure changes within the cell. The sequence is that of Large-conductance mechanosensitive channel from Chromobacterium violaceum (strain ATCC 12472 / DSM 30191 / JCM 1249 / CCUG 213 / NBRC 12614 / NCIMB 9131 / NCTC 9757 / MK).